A 59-amino-acid chain; its full sequence is Large ribosomal subunit protein uL30 (59 aa).

Belongs to the universal ribosomal protein uL30 family. As to quaternary structure, part of the 50S ribosomal subunit.

The protein is Large ribosomal subunit protein uL30 of Solidesulfovibrio magneticus (strain ATCC 700980 / DSM 13731 / RS-1) (Desulfovibrio magneticus).